A 172-amino-acid polypeptide reads, in one-letter code: Large ribosomal subunit protein uL10 (172 aa).

It belongs to the universal ribosomal protein uL10 family. As to quaternary structure, part of the ribosomal stalk of the 50S ribosomal subunit. The N-terminus interacts with L11 and the large rRNA to form the base of the stalk. The C-terminus forms an elongated spine to which L12 dimers bind in a sequential fashion forming a multimeric L10(L12)X complex.

In terms of biological role, forms part of the ribosomal stalk, playing a central role in the interaction of the ribosome with GTP-bound translation factors. The polypeptide is Large ribosomal subunit protein uL10 (Ruegeria sp. (strain TM1040) (Silicibacter sp.)).